Consider the following 342-residue polypeptide: tRNA N6-adenosine threonylcarbamoyltransferase (342 aa).

His115 and His119 together coordinate Fe cation. Substrate is bound by residues 138-142 (IISGG), Asp171, Gly184, Asp188, and Asn276. Asp304 lines the Fe cation pocket.

It belongs to the KAE1 / TsaD family. The cofactor is Fe(2+).

It is found in the cytoplasm. It carries out the reaction L-threonylcarbamoyladenylate + adenosine(37) in tRNA = N(6)-L-threonylcarbamoyladenosine(37) in tRNA + AMP + H(+). Required for the formation of a threonylcarbamoyl group on adenosine at position 37 (t(6)A37) in tRNAs that read codons beginning with adenine. Is involved in the transfer of the threonylcarbamoyl moiety of threonylcarbamoyl-AMP (TC-AMP) to the N6 group of A37, together with TsaE and TsaB. TsaD likely plays a direct catalytic role in this reaction. The sequence is that of tRNA N6-adenosine threonylcarbamoyltransferase from Endomicrobium trichonymphae.